The primary structure comprises 353 residues: Small ribosomal subunit biogenesis GTPase RsgA (353 aa).

Residues 1-24 are disordered; it reads MSKNKLSKGQQRRVKANHQRRLKT. The segment covering 10–23 has biased composition (basic residues); sequence QQRRVKANHQRRLK. The CP-type G domain occupies 104–274; that stretch reads ASVLTRPDFY…VIDSPGVREF (171 aa). Residues 160 to 163 and 214 to 222 each bind GTP; these read NKID and GQSGVGKSS. Residues Cys298, Cys303, His305, and Cys311 each contribute to the Zn(2+) site.

This sequence belongs to the TRAFAC class YlqF/YawG GTPase family. RsgA subfamily. Monomer. Associates with 30S ribosomal subunit, binds 16S rRNA. It depends on Zn(2+) as a cofactor.

Its subcellular location is the cytoplasm. Functionally, one of several proteins that assist in the late maturation steps of the functional core of the 30S ribosomal subunit. Helps release RbfA from mature subunits. May play a role in the assembly of ribosomal proteins into the subunit. Circularly permuted GTPase that catalyzes slow GTP hydrolysis, GTPase activity is stimulated by the 30S ribosomal subunit. The chain is Small ribosomal subunit biogenesis GTPase RsgA from Klebsiella pneumoniae subsp. pneumoniae (strain ATCC 700721 / MGH 78578).